A 379-amino-acid polypeptide reads, in one-letter code: Lipid-A-disaccharide synthase (379 aa).

The protein belongs to the LpxB family.

The enzyme catalyses a lipid X + a UDP-2-N,3-O-bis[(3R)-3-hydroxyacyl]-alpha-D-glucosamine = a lipid A disaccharide + UDP + H(+). It participates in bacterial outer membrane biogenesis; LPS lipid A biosynthesis. Its function is as follows. Condensation of UDP-2,3-diacylglucosamine and 2,3-diacylglucosamine-1-phosphate to form lipid A disaccharide, a precursor of lipid A, a phosphorylated glycolipid that anchors the lipopolysaccharide to the outer membrane of the cell. This chain is Lipid-A-disaccharide synthase, found in Persephonella marina (strain DSM 14350 / EX-H1).